A 1149-amino-acid polypeptide reads, in one-letter code: Potassium channel subfamily U member 1 (1149 aa).

Over 1–24 (MFQTKLRNETWEDLPKMSCTTEIQ) the chain is Extracellular. A helical transmembrane segment spans residues 25 to 45 (AAFILSSFVTFFSGLIILLIF). The Cytoplasmic segment spans residues 46 to 101 (RLIWRSVKKWQIIKGTGIILELFTSGTIARSHVRSLHFQGQFRDHIEMLLSAQTFV). Residues 102–122 (GQVLVILVFVLSIGSLIIYFI) traverse the membrane as a helical segment. Over 123 to 138 (NSADPVGSCSSYEDKT) the chain is Extracellular. Residues 139 to 159 (IPIDLVFNAFFSFYFGLRFMA) form a helical membrane-spanning segment. Topologically, residues 160-163 (ADDK) are cytoplasmic. The chain crosses the membrane as a helical span at residues 164–184 (IKFWLEMNSIVDIFTIPPTFI). Residues 185–188 (SYYL) lie on the Extracellular side of the membrane. Residues 189-209 (KSNWLGLRFLRALRLLELPQI) form a helical; Voltage-sensor membrane-spanning segment. Residues 210–226 (LQILRAIKTSNSVKFSK) lie on the Cytoplasmic side of the membrane. Residues 227–247 (LLSIILSTWFTAAGFIHLVEN) form a helical membrane-spanning segment. The Extracellular portion of the chain corresponds to 248–259 (SGDPWLKGRNSQ). Positions 260–282 (NISYFESIYLVMATTSTVGFGDV) form an intramembrane region, pore-forming. The short motif at 276-279 (TVGF) is the Selectivity for potassium element. Residues 283-291 (VAKTSLGRT) lie on the Extracellular side of the membrane. Residues 292-312 (FIMFFTLGSLILFANYIPEMV) traverse the membrane as a helical segment. The Cytoplasmic segment spans residues 313–1149 (ELFANKRKYT…EDPFAYSEPL (837 aa)). RCK N-terminal domains lie at 331-473 (KKFI…DNII) and 713-884 (RNHI…EGSL). Disordered regions lie at residues 828-854 (QIDS…NEKS) and 1118-1149 (SQIP…SEPL). Over residues 830–840 (DSSSDPSPSVS) the composition is skewed to low complexity. The span at 1125-1135 (NAKENERKTSD) shows a compositional bias: basic and acidic residues.

It belongs to the potassium channel family. Calcium-activated (TC 1.A.1.3) subfamily. KCa5.1/KCNU1 sub-subfamily. Homotetramer; which constitutes the activated potassium channel. Interacts with LRRC52; this interaction changes channel gating properties, such as shifting gating to more negative potentials at a given pH. In terms of tissue distribution, testis-specific.

Its subcellular location is the cell membrane. The protein localises to the cell projection. The protein resides in the cilium. It localises to the flagellum membrane. It catalyses the reaction K(+)(in) = K(+)(out). Regulated by changes in cytosolic pH; activated by alkalization. Activated by intracellular Ca(2+). Despite strong sequence similarity, human KCNU1 channels are significantly more sensitive to activation by internal Ca(2+) and less pH-sensitive than mouse KCNU1. VU0546110 acts as a selective inhibitor. The auxiliary subunit LRRC52 shifts the activation of KCNU1 to more negative potentials at a given pH. Functionally, testis-specific potassium channel activated by both intracellular pH and membrane voltage that mediates export of K(+). Represents the primary spermatozoan K(+) current. The channel underlies a pH-triggered membrane hyperpolarization during the process of sperm capacitation, as sperm encounter the alkaline environment near the ovum in the female reproductive tract, thereby playing an essential for male fertility. The polypeptide is Potassium channel subfamily U member 1 (Homo sapiens (Human)).